The sequence spans 162 residues: Catabolic 3-dehydroquinase (162 aa).

Y24 functions as the Proton acceptor in the catalytic mechanism. Substrate-binding residues include N88, H94, and D101. H114 functions as the Proton donor in the catalytic mechanism. Substrate is bound by residues 115–116 and R125; that span reads VS.

The protein belongs to the type-II 3-dehydroquinase family. In terms of assembly, homododecamer. Adopts a ring-like structure, composed of an arrangement of two hexameric rings stacked on top of one another.

The catalysed reaction is 3-dehydroquinate = 3-dehydroshikimate + H2O. It participates in aromatic compound metabolism; 3,4-dihydroxybenzoate biosynthesis; 3,4-dihydroxybenzoate from 3-dehydroquinate: step 1/2. Its function is as follows. Is involved in the catabolism of quinate. Allows the utilization of quinate as carbon source via the beta-ketoadipate pathway. The sequence is that of Catabolic 3-dehydroquinase from Podospora anserina (strain S / ATCC MYA-4624 / DSM 980 / FGSC 10383) (Pleurage anserina).